The sequence spans 301 residues: Homoserine O-acetyltransferase (301 aa).

Cys142 (acyl-thioester intermediate) is an active-site residue. Substrate is bound by residues Lys163 and Ser192. The active-site Proton acceptor is the His235. The active site involves Glu237. A substrate-binding site is contributed by Arg249.

The protein belongs to the MetA family.

The protein localises to the cytoplasm. It carries out the reaction L-homoserine + acetyl-CoA = O-acetyl-L-homoserine + CoA. It participates in amino-acid biosynthesis; L-methionine biosynthesis via de novo pathway; O-acetyl-L-homoserine from L-homoserine: step 1/1. In terms of biological role, transfers an acetyl group from acetyl-CoA to L-homoserine, forming acetyl-L-homoserine. This chain is Homoserine O-acetyltransferase, found in Clostridium acetobutylicum (strain ATCC 824 / DSM 792 / JCM 1419 / IAM 19013 / LMG 5710 / NBRC 13948 / NRRL B-527 / VKM B-1787 / 2291 / W).